The following is a 573-amino-acid chain: Arylsulfatase I (573 aa).

The signal sequence occupies residues 1-23 (MHALSGFSLVSLLSLGYLSWDWA). The Ca(2+) site is built by Asp55, Asp56, and Cys93. The Nucleophile role is filled by Cys93. Cys93 is subject to 3-oxoalanine (Cys). Lys147 is a substrate binding site. His149 is a catalytic residue. His239 contacts substrate. 2 N-linked (GlcNAc...) asparagine glycosylation sites follow: Asn276 and Asn288. Ca(2+) is bound by residues Asp297 and Asn298. Residue Lys315 participates in substrate binding. Asn466 and Asn496 each carry an N-linked (GlcNAc...) asparagine glycan. Positions 506–550 (AANPRAHPDFNGGAWGPWASDEDEEEEDEEEEGRARSFPRGRRKK) are disordered. Over residues 525 to 537 (SDEDEEEEDEEEE) the composition is skewed to acidic residues.

This sequence belongs to the sulfatase family. Ca(2+) is required as a cofactor. In terms of processing, the oxidation of Cys-93 residue to 3-oxoalanine (also known as C(alpha)-formylglycine) by SUMF1/Sulfatase-modifying factor 1, seems critical for catalytic activity.

It is found in the secreted. The protein localises to the endoplasmic reticulum. Displays arylsulfatase activity at neutral pH, when co-expressed with SUMF1; arylsulfatase activity is measured in the secretion medium of retinal cell line, but no activity is recorded when measured in cell extracts. The protein is Arylsulfatase I (Arsi) of Rattus norvegicus (Rat).